We begin with the raw amino-acid sequence, 417 residues long: Putative F-box protein At3g58950 (417 aa).

In terms of domain architecture, F-box spans 1-53 (MDLFSSLPDEVLCHILSFLTTKEAALASVVSKRWRNQFALVPNLDIDEEGKRE).

This chain is Putative F-box protein At3g58950, found in Arabidopsis thaliana (Mouse-ear cress).